We begin with the raw amino-acid sequence, 357 residues long: Glutamate 5-kinase (357 aa).

An ATP-binding site is contributed by Lys7. 3 residues coordinate substrate: Ser43, Asp130, and Asn142. ATP contacts are provided by residues 162 to 163 and 205 to 211; these read TD and TGGMTTK. One can recognise a PUA domain in the interval 270 to 341; it reads EGELCLDQGA…QALSVVTDAE (72 aa).

Belongs to the glutamate 5-kinase family.

It localises to the cytoplasm. The enzyme catalyses L-glutamate + ATP = L-glutamyl 5-phosphate + ADP. It participates in amino-acid biosynthesis; L-proline biosynthesis; L-glutamate 5-semialdehyde from L-glutamate: step 1/2. Catalyzes the transfer of a phosphate group to glutamate to form L-glutamate 5-phosphate. The protein is Glutamate 5-kinase of Synechococcus sp. (strain CC9902).